Reading from the N-terminus, the 292-residue chain is Acetylglutamate kinase (292 aa).

Substrate is bound by residues 64-65, Arg86, and Asn190; that span reads GG.

It belongs to the acetylglutamate kinase family. ArgB subfamily.

It is found in the cytoplasm. It carries out the reaction N-acetyl-L-glutamate + ATP = N-acetyl-L-glutamyl 5-phosphate + ADP. It functions in the pathway amino-acid biosynthesis; L-arginine biosynthesis; N(2)-acetyl-L-ornithine from L-glutamate: step 2/4. Its function is as follows. Catalyzes the ATP-dependent phosphorylation of N-acetyl-L-glutamate. The sequence is that of Acetylglutamate kinase from Geobacter metallireducens (strain ATCC 53774 / DSM 7210 / GS-15).